The following is a 402-amino-acid chain: Beta-ketoacyl-[acyl-carrier-protein] synthase III B, chloroplastic (402 aa).

Residues Cys178, His328, and Asn358 contribute to the active site.

The protein belongs to the thiolase-like superfamily. FabH family.

Its subcellular location is the plastid. The protein resides in the chloroplast. The enzyme catalyses malonyl-[ACP] + acetyl-CoA + H(+) = 3-oxobutanoyl-[ACP] + CO2 + CoA. The protein operates within lipid metabolism; fatty acid biosynthesis. In terms of biological role, catalyzes the condensation reaction of fatty acid synthesis by the addition to an acyl acceptor of two carbons from malonyl-ACP. KAS III catalyzes the first condensation reaction which initiates fatty acid synthesis and may therefore play a role in governing the total rate of fatty acid production. Possesses both acetoacetyl-ACP synthase and acetyl transacylase activities. This is Beta-ketoacyl-[acyl-carrier-protein] synthase III B, chloroplastic (KAS3B) from Cuphea wrightii (Wright's waxweed).